Here is a 293-residue protein sequence, read N- to C-terminus: Ribosomal RNA small subunit methyltransferase A (293 aa).

6 residues coordinate S-adenosyl-L-methionine: N29, L31, G56, E77, D102, and N127.

Belongs to the class I-like SAM-binding methyltransferase superfamily. rRNA adenine N(6)-methyltransferase family. RsmA subfamily.

It localises to the cytoplasm. It carries out the reaction adenosine(1518)/adenosine(1519) in 16S rRNA + 4 S-adenosyl-L-methionine = N(6)-dimethyladenosine(1518)/N(6)-dimethyladenosine(1519) in 16S rRNA + 4 S-adenosyl-L-homocysteine + 4 H(+). In terms of biological role, specifically dimethylates two adjacent adenosines (A1518 and A1519) in the loop of a conserved hairpin near the 3'-end of 16S rRNA in the 30S particle. May play a critical role in biogenesis of 30S subunits. This is Ribosomal RNA small subunit methyltransferase A from Geobacillus thermodenitrificans (strain NG80-2).